The chain runs to 414 residues: Putative L-lactate dehydrogenase (414 aa).

The 378-residue stretch at 29-406 folds into the FMN hydroxy acid dehydrogenase domain; it reads RRLGAALTIQ…SPRHVTQLRR (378 aa). Y55 provides a ligand contact to a 2-oxocarboxylate. Positions 137 and 159 each coordinate FMN. Y161 is an a 2-oxocarboxylate binding site. Residue T187 coordinates FMN. R196 is an a 2-oxocarboxylate binding site. K277 contributes to the FMN binding site. H301 (proton acceptor) is an active-site residue. R304 provides a ligand contact to a 2-oxocarboxylate. Residues 332–336 and 355–356 each bind FMN; these read DTGIM and GR.

The protein belongs to the FMN-dependent alpha-hydroxy acid dehydrogenase family. The cofactor is FMN.

The enzyme catalyses (S)-lactate + A = pyruvate + AH2. The chain is Putative L-lactate dehydrogenase (lldD) from Mycobacterium tuberculosis (strain ATCC 25618 / H37Rv).